A 335-amino-acid chain; its full sequence is Vitamin B12 import system permease protein BtuC (335 aa).

The next 8 helical transmembrane spans lie at 25–45 (LVVM…VWIW), 67–87 (MAVI…QALF), 94–113 (PGLL…AVLL), 117–139 (LLPI…SILL), 153–173 (LLVG…AVYF), 243–263 (VLAI…ISFI), 281–301 (RLLA…DVVA), and 309–329 (ELPI…WLLI).

It belongs to the binding-protein-dependent transport system permease family. FecCD subfamily. In terms of assembly, the complex is composed of two ATP-binding proteins (BtuD), two transmembrane proteins (BtuC) and a solute-binding protein (BtuF).

The protein resides in the cell inner membrane. In terms of biological role, part of the ABC transporter complex BtuCDF involved in vitamin B12 import. Involved in the translocation of the substrate across the membrane. The protein is Vitamin B12 import system permease protein BtuC of Yersinia pseudotuberculosis serotype O:1b (strain IP 31758).